The primary structure comprises 289 residues: ATP synthase gamma chain (289 aa).

The protein belongs to the ATPase gamma chain family. In terms of assembly, F-type ATPases have 2 components, CF(1) - the catalytic core - and CF(0) - the membrane proton channel. CF(1) has five subunits: alpha(3), beta(3), gamma(1), delta(1), epsilon(1). CF(0) has three main subunits: a, b and c.

It is found in the cell inner membrane. Produces ATP from ADP in the presence of a proton gradient across the membrane. The gamma chain is believed to be important in regulating ATPase activity and the flow of protons through the CF(0) complex. The chain is ATP synthase gamma chain from Coxiella burnetii (strain CbuG_Q212) (Coxiella burnetii (strain Q212)).